A 320-amino-acid chain; its full sequence is 4-hydroxy-3-methylbut-2-enyl diphosphate reductase (320 aa).

C12 provides a ligand contact to [4Fe-4S] cluster. (2E)-4-hydroxy-3-methylbut-2-enyl diphosphate-binding residues include H41 and H74. Residues H41 and H74 each contribute to the dimethylallyl diphosphate site. Residues H41 and H74 each coordinate isopentenyl diphosphate. Position 96 (C96) interacts with [4Fe-4S] cluster. H124 contacts (2E)-4-hydroxy-3-methylbut-2-enyl diphosphate. H124 contacts dimethylallyl diphosphate. H124 is an isopentenyl diphosphate binding site. Residue E126 is the Proton donor of the active site. T167 is a binding site for (2E)-4-hydroxy-3-methylbut-2-enyl diphosphate. Position 197 (C197) interacts with [4Fe-4S] cluster. Residues S225, S226, N227, and S269 each contribute to the (2E)-4-hydroxy-3-methylbut-2-enyl diphosphate site. Positions 225, 226, 227, and 269 each coordinate dimethylallyl diphosphate. The isopentenyl diphosphate site is built by S225, S226, N227, and S269.

This sequence belongs to the IspH family. [4Fe-4S] cluster serves as cofactor.

The catalysed reaction is isopentenyl diphosphate + 2 oxidized [2Fe-2S]-[ferredoxin] + H2O = (2E)-4-hydroxy-3-methylbut-2-enyl diphosphate + 2 reduced [2Fe-2S]-[ferredoxin] + 2 H(+). It catalyses the reaction dimethylallyl diphosphate + 2 oxidized [2Fe-2S]-[ferredoxin] + H2O = (2E)-4-hydroxy-3-methylbut-2-enyl diphosphate + 2 reduced [2Fe-2S]-[ferredoxin] + 2 H(+). It participates in isoprenoid biosynthesis; dimethylallyl diphosphate biosynthesis; dimethylallyl diphosphate from (2E)-4-hydroxy-3-methylbutenyl diphosphate: step 1/1. Its pathway is isoprenoid biosynthesis; isopentenyl diphosphate biosynthesis via DXP pathway; isopentenyl diphosphate from 1-deoxy-D-xylulose 5-phosphate: step 6/6. Its function is as follows. Catalyzes the conversion of 1-hydroxy-2-methyl-2-(E)-butenyl 4-diphosphate (HMBPP) into a mixture of isopentenyl diphosphate (IPP) and dimethylallyl diphosphate (DMAPP). Acts in the terminal step of the DOXP/MEP pathway for isoprenoid precursor biosynthesis. The polypeptide is 4-hydroxy-3-methylbut-2-enyl diphosphate reductase (Francisella tularensis subsp. novicida (strain U112)).